The sequence spans 716 residues: Zinc finger protein 840 (716 aa).

The 72-residue stretch at 42–113 (VRFRDVAVVF…EREVTGDPCP (72 aa)) folds into the KRAB domain. C2H2-type zinc fingers lie at residues 151–173 (YECD…QKIH), 207–229 (FECN…QSMH), 235–257 (YKCD…QRFH), 277–299 (FSCN…LLIH), 305–327 (YTCN…QRTH), 333–355 (HKCD…QKTH), 361–383 (FSCN…QQIH), 389–411 (FICS…KGTH), 417–439 (YQCT…QKTH), 445–467 (FACN…KKIH), 473–495 (YECG…KKIH), 501–523 (FVCN…QRTH), 549–571 (FPCN…QQIH), 577–599 (FICS…KGTH), 605–627 (YQCT…QKTH), 633–655 (FTCN…KKIH), 661–683 (YECG…KKIH), and 689–711 (FVCN…QITH). The segment at 515–548 (KLSRHQRTHNKKENSSKSVSNLNKHQKTHAGEKP) is disordered.

The protein belongs to the krueppel C2H2-type zinc-finger protein family.

It is found in the nucleus. In terms of biological role, may be involved in transcriptional regulation. The chain is Zinc finger protein 840 (ZNF840P) from Homo sapiens (Human).